Reading from the N-terminus, the 218-residue chain is ATP phosphoribosyltransferase (218 aa).

Belongs to the ATP phosphoribosyltransferase family. Short subfamily. In terms of assembly, heteromultimer composed of HisG and HisZ subunits.

The protein localises to the cytoplasm. The enzyme catalyses 1-(5-phospho-beta-D-ribosyl)-ATP + diphosphate = 5-phospho-alpha-D-ribose 1-diphosphate + ATP. The protein operates within amino-acid biosynthesis; L-histidine biosynthesis; L-histidine from 5-phospho-alpha-D-ribose 1-diphosphate: step 1/9. Functionally, catalyzes the condensation of ATP and 5-phosphoribose 1-diphosphate to form N'-(5'-phosphoribosyl)-ATP (PR-ATP). Has a crucial role in the pathway because the rate of histidine biosynthesis seems to be controlled primarily by regulation of HisG enzymatic activity. The chain is ATP phosphoribosyltransferase from Burkholderia thailandensis (strain ATCC 700388 / DSM 13276 / CCUG 48851 / CIP 106301 / E264).